Here is a 218-residue protein sequence, read N- to C-terminus: Small ribosomal subunit protein uS3 (218 aa).

A KH type-2 domain is found at 40–109 (IRKIINTEYS…DVSINIREVK (70 aa)).

It belongs to the universal ribosomal protein uS3 family. Part of the 30S ribosomal subunit. Forms a tight complex with proteins S10 and S14.

Functionally, binds the lower part of the 30S subunit head. Binds mRNA in the 70S ribosome, positioning it for translation. This chain is Small ribosomal subunit protein uS3, found in Orientia tsutsugamushi (strain Boryong) (Rickettsia tsutsugamushi).